The primary structure comprises 601 residues: Zinc finger CCCH domain-containing protein 33 (601 aa).

ANK repeat units follow at residues Glu-71–Arg-101 and Asp-106–Ala-138. Over residues Pro-167–Ser-180 the composition is skewed to low complexity. A disordered region spans residues Pro-167 to Leu-203. 2 consecutive C3H1-type zinc fingers follow at residues Ser-252 to Phe-280 and Gln-288 to Asp-312.

This chain is Zinc finger CCCH domain-containing protein 33, found in Oryza sativa subsp. japonica (Rice).